The sequence spans 410 residues: Mating-type locus allele B6 protein (410 aa).

The tract at residues 1–110 (MSRDPKLSLS…VNVASPAVEY (110 aa)) is variable domain between B alleles. Residues 107–184 (AVEYRNLSED…NARRRSGWSH (78 aa)) constitute a DNA-binding region (homeobox; TALE-type). Positions 111–410 (RNLSEDLPAY…PFFCLSIAFV (300 aa)) are highly conserved between B alleles. Disordered regions lie at residues 202–224 (RAKL…PSDD), 278–335 (TPKP…TPEL), and 373–393 (KARG…QQPD). The segment covering 205 to 219 (LSSSNQSTPPSLTSE) has biased composition (polar residues). The short motif at 276-308 (KKTPKPGMPRPVTTVAKRQPARKTKPAAKPKSR) is the Nuclear localization signal element. Positions 294–307 (QPARKTKPAAKPKS) are enriched in basic residues. Positions 312–335 (PRASTTPSIDSTLDSSKLESTPEL) are enriched in polar residues. The segment at 333-410 (PELSMCSTAD…PFFCLSIAFV (78 aa)) is not essential for B6 function. Residues 375–388 (RGNRKVKALPKRAG) are compositionally biased toward basic residues.

This sequence belongs to the TALE/M-ATYP homeobox family.

The protein localises to the nucleus. The B locus has at least 25 alleles, and any combination of two different B alleles yields a multimeric regulatory protein, that activates genes responsible for the pathogenicity and for the sexual development of the fungus within the corn plant. This Mycosarcoma maydis (Corn smut fungus) protein is Mating-type locus allele B6 protein.